A 1761-amino-acid chain; its full sequence is Lysine-specific demethylase 3B (1761 aa).

Ala2 bears the N-acetylalanine mark. The disordered stretch occupies residues 253–346 (DNSAPQSEGG…QRAKQPPSTF (94 aa)). The segment covering 298–309 (ASKKLKGDRGEV) has biased composition (basic and acidic residues). Lys361 is subject to N6-acetyllysine. 2 disordered regions span residues 370 to 394 (QDEP…QTPL) and 438 to 496 (DTGL…NGVL). Composition is skewed to polar residues over residues 380 to 392 (ASFT…TGQT), 453 to 468 (SRSQ…SILA), and 477 to 495 (PSSS…SNGV). Residues Ser492, Ser546, Ser556, and Ser560 each carry the phosphoserine modification. A disordered region spans residues 572–603 (RSVLGTDTKPGSKAGSSVDRKVPAESMPTLTP). Thr614 carries the phosphothreonine modification. Residues 714-762 (GPSLSAMGNGRSSSPTSSLTQPIEMPTLSSSPTEERPTVGPGQQDNPLL) form a disordered region. A compositionally biased stretch (polar residues) spans 723–745 (GRSSSPTSSLTQPIEMPTLSSSP). Phosphoserine occurs at positions 766, 773, 778, and 779. Lys788 is covalently cross-linked (Glycyl lysine isopeptide (Lys-Gly) (interchain with G-Cter in SUMO2)). The residue at position 798 (Ser798) is a Phosphoserine. The interval 805-827 (ACRQDSDSSTNSDLSDLSDSEEQ) is disordered. The C6-type zinc-finger motif lies at 1031-1056 (CDVCETTLFNIHWVCRKCGFGVCLDC). Positions 1142-1161 (GMSQLPSINPSASSGNETTF) are enriched in polar residues. Residues 1142–1220 (GMSQLPSINP…PCPDTAPPSS (79 aa)) form a disordered region. Residues 1174–1193 (EPDHVPKADSTDIRSEEPLK) show a composition bias toward basic and acidic residues. Positions 1194 to 1204 (TDSSASNSNSE) are enriched in polar residues. Residues Ser1253 and Ser1259 each carry the phosphoserine modification. Residues 1293 to 1297 (LRDLL) carry the LXXLL motif motif. Residues 1498–1721 (MPTRFEDLME…HCFRLTQEFR (224 aa)) form the JmjC domain. 3 residues coordinate Fe cation: His1560, Asp1562, and His1689.

Belongs to the JHDM2 histone demethylase family. It depends on Fe(2+) as a cofactor. As to expression, ubiquitous. Highly expressed in placenta, skeletal muscle, kidney, heart and liver.

The protein localises to the nucleus. The enzyme catalyses N(6),N(6)-dimethyl-L-lysyl(9)-[histone H3] + 2 2-oxoglutarate + 2 O2 = L-lysyl(9)-[histone H3] + 2 formaldehyde + 2 succinate + 2 CO2. Histone demethylase that specifically demethylates 'Lys-9' of histone H3, thereby playing a central role in histone code. Demethylation of Lys residue generates formaldehyde and succinate. May have tumor suppressor activity. The chain is Lysine-specific demethylase 3B (KDM3B) from Homo sapiens (Human).